The primary structure comprises 437 residues: MLWKLTDNIKYEDCEDRHDGASNGTARLPQLGTVGQSPYTSAPPLSHTPNADFQPPYFPPPYQPIYPQSQDPYSHVNDPYSLNPLHAQPQPQHPGWPGQRQSQESGLLHTHRGLPHQLSGLDPRRDYRRHEDLLHGPHGLGSGLGDLPIHSLPHAIEDVPHVEDPGINIPDQTVIKKGPVSLSKSNSNAVSAIPINKDNLFGGVVNPNEVFCSVPGRLSLLSSTSKYKVTVAEVQRRLSPPECLNASLLGGVLRRAKSKNGGRSLREKLDKIGLNLPAGRRKAANVTLLTSLVEGEAVHLARDFGYVCETEFPAKAVAEFLNRQHSDPNEQVTRKNMLLATKQICKEFTDLLAQDRSPLGNSRPNPILEPGIQSCLTHFNLISHGFGSPAVCAAVTALQNYLTEALKAMDKMYLSNNPNSHTDNNAKSSDKEEKHRK.

Lysine 10 is covalently cross-linked (Glycyl lysine isopeptide (Lys-Gly) (interchain with G-Cter in SUMO); alternate). A Glycyl lysine isopeptide (Lys-Gly) (interchain with G-Cter in SUMO2); alternate cross-link involves residue lysine 10. A disordered region spans residues 14–107 (CEDRHDGASN…GQRQSQESGL (94 aa)). The PPxY motif signature appears at 57–62 (YFPPPY). Composition is skewed to low complexity over residues 65 to 74 (IYPQSQDPYS) and 88 to 101 (QPQP…GQRQ). Residues lysine 177 and lysine 184 each participate in a glycyl lysine isopeptide (Lys-Gly) (interchain with G-Cter in SUMO2) cross-link. Position 239 is a phosphoserine; by PKA (serine 239). The interval 280–410 (RRKAANVTLL…YLTEALKAMD (131 aa)) is H-S-H (helix-span-helix), dimerization. Positions 414 to 427 (LSNNPNSHTDNNAK) are enriched in polar residues. The segment at 414-437 (LSNNPNSHTDNNAKSSDKEEKHRK) is disordered. Residues 428-437 (SSDKEEKHRK) are compositionally biased toward basic and acidic residues.

This sequence belongs to the AP-2 family. Binds DNA as a dimer. Can form homodimers or heterodimers with other AP-2 family members. Interacts with WWOX. Interacts with CITED4. Interacts with UBE2I. Interacts with RALBP1 in a complex also containing EPN1 and NUMB during interphase and mitosis. Interacts with KCTD1; this interaction represses transcription activation. Interacts (via C-terminus) with CITED2 (via C-terminus); the interaction stimulates TFAP2A-transcriptional activation. Interacts (via N-terminus) with EP300 (via N-terminus); the interaction requires CITED2. Interacts with KCTD15; this interaction inhibits TFAP2A transcriptional activation. Post-translationally, sumoylated on Lys-10; which inhibits transcriptional activity.

The protein resides in the nucleus. Sequence-specific DNA-binding protein that interacts with inducible viral and cellular enhancer elements to regulate transcription of selected genes. AP-2 factors bind to the consensus sequence 5'-GCCNNNGGC-3' and activate genes involved in a large spectrum of important biological functions including proper eye, face, body wall, limb and neural tube development. They also suppress a number of genes including MCAM/MUC18, C/EBP alpha and MYC. AP-2-alpha is the only AP-2 protein required for early morphogenesis of the lens vesicle. Together with the CITED2 coactivator, stimulates the PITX2 P1 promoter transcription activation. Associates with chromatin to the PITX2 P1 promoter region. This Bos taurus (Bovine) protein is Transcription factor AP-2-alpha (TFAP2A).